Here is a 707-residue protein sequence, read N- to C-terminus: Heat shock protein hsp88 (707 aa).

Basic and acidic residues predominate over residues 662 to 692 (EAEKAAKKAEEEARKAKEAAEKAAQEGAKDD). The disordered stretch occupies residues 662 to 707 (EAEKAAKKAEEEARKAKEAAEKAAQEGAKDDEMTDADAPKPVVEEA).

This sequence belongs to the heat shock protein 70 family. In terms of assembly, binds hsp30 independent of temperature or substrate. In terms of processing, the N-terminus is blocked.

The protein resides in the cytoplasm. The sequence is that of Heat shock protein hsp88 (hsp88) from Neurospora crassa (strain ATCC 24698 / 74-OR23-1A / CBS 708.71 / DSM 1257 / FGSC 987).